The following is a 441-amino-acid chain: Diuretic hormone receptor (441 aa).

Residues Asn99, Asn107, and Asn112 are each glycosylated (N-linked (GlcNAc...) asparagine). Residues 135–158 traverse the membrane as a helical segment; the sequence is FVFFVGFCLSLVAIAVAIWIFLYF. Over 159-166 the chain is Cytoplasmic; sequence KDLRCLRN. A helical transmembrane segment spans residues 167–187; the sequence is TIHTNLMATYICNDATWIISA. Topologically, residues 188 to 194 are extracellular; that stretch reads VVQEYVE. A helical membrane pass occupies residues 195-224; the sequence is NGGLCSVLAVLMHYFYLTNFFWMFVEGLYL. The Cytoplasmic segment spans residues 225–238; sequence FLLVVATFTGEKVK. Residues 239–260 form a helical membrane-spanning segment; the sequence is LQIYIIIGWGIPGVIVVTWAII. Residues 261–291 lie on the Extracellular side of the membrane; that stretch reads KHLGKTAPDNAGESHPMVLLIKHCPWMAEDY. Residues 292 to 315 form a helical membrane-spanning segment; the sequence is FDWIHQAPVITVLAVNLVFLFSIM. Residues 316–338 lie on the Cytoplasmic side of the membrane; that stretch reads WVLITKLQSANTAETQQYRKATK. The chain crosses the membrane as a helical span at residues 339–357; it reads ALLVLFPLLGITYILMMQG. The Extracellular portion of the chain corresponds to 358–371; sequence PMDGVAGHVFRNAQ. Residues 372–391 traverse the membrane as a helical segment; that stretch reads ALLLSLQGFTVALFYCFLNT. Residues 392–441 are Cytoplasmic-facing; it reads EVQNTLRHRMSRWRETRTVGGGRRYTLSGHSKDWSPRSRTESIRCLQHRS.

This sequence belongs to the G-protein coupled receptor 2 family. In terms of tissue distribution, expressed in Malpighian tubules.

The protein localises to the cell membrane. Functionally, receptor for the insect diurectic hormone. The activity of this receptor is mediated by G proteins which activate adenylyl cyclase. The sequence is that of Diuretic hormone receptor from Acheta domesticus (House cricket).